We begin with the raw amino-acid sequence, 243 residues long: 1-(5-phosphoribosyl)-5-[(5-phosphoribosylamino)methylideneamino] imidazole-4-carboxamide isomerase (243 aa).

The active-site Proton acceptor is the aspartate 8. Aspartate 129 serves as the catalytic Proton donor.

Belongs to the HisA/HisF family.

The protein resides in the cytoplasm. The catalysed reaction is 1-(5-phospho-beta-D-ribosyl)-5-[(5-phospho-beta-D-ribosylamino)methylideneamino]imidazole-4-carboxamide = 5-[(5-phospho-1-deoxy-D-ribulos-1-ylimino)methylamino]-1-(5-phospho-beta-D-ribosyl)imidazole-4-carboxamide. It participates in amino-acid biosynthesis; L-histidine biosynthesis; L-histidine from 5-phospho-alpha-D-ribose 1-diphosphate: step 4/9. This Azorhizobium caulinodans (strain ATCC 43989 / DSM 5975 / JCM 20966 / LMG 6465 / NBRC 14845 / NCIMB 13405 / ORS 571) protein is 1-(5-phosphoribosyl)-5-[(5-phosphoribosylamino)methylideneamino] imidazole-4-carboxamide isomerase.